Here is a 431-residue protein sequence, read N- to C-terminus: Protein farnesyltransferase subunit beta (431 aa).

PFTB repeat units lie at residues 130–171 (KRKI…SLCD), 182–224 (RKGI…TLLN), 231–273 (TEGV…AILR), 280–322 (VEKL…AILE), and 332–375 (KHAL…AVAE). (2E,6E)-farnesyl diphosphate is bound by residues 258 to 261 (HGGY) and 301 to 304 (RSNK). Zn(2+) is bound by residues D307 and C309. A (2E,6E)-farnesyl diphosphate-binding site is contributed by 310–313 (YSFW). Zn(2+) is bound at residue H363.

It belongs to the protein prenyltransferase subunit beta family. In terms of assembly, heterodimer of an alpha (RAM2) and a beta (RAM1) subunit. Zn(2+) serves as cofactor.

It localises to the cytoplasm. The catalysed reaction is L-cysteinyl-[protein] + (2E,6E)-farnesyl diphosphate = S-(2E,6E)-farnesyl-L-cysteinyl-[protein] + diphosphate. Functionally, catalyzes the transfer of a farnesyl moiety from farnesyl diphosphate to a cysteine at the fourth position from the C-terminus of several proteins having the C-terminal sequence Cys-aliphatic-aliphatic-X where X is Ser, Ala, Met, Cys, or Gln. Required for the membrane localization of proteins such as a-factor, Ras proteins and other membrane proteins containing the C-terminal CAAX motif. The beta subunit is responsible for isoprenoid and peptide-binding. This is Protein farnesyltransferase subunit beta from Saccharomyces cerevisiae (strain ATCC 204508 / S288c) (Baker's yeast).